A 451-amino-acid chain; its full sequence is POU domain, class 3, transcription factor 1 (451 aa).

Disordered regions lie at residues 1–21, 69–114, 134–154, 186–253, and 395–451; these read MATT…GTGP, AHPQ…GFHA, AHHL…HQPQ, GLHH…PSSD, and KRMT…GSVQ. Gly residues-rich tracts occupy residues 11–20, 76–85, and 95–112; these read GPGGGAGGTG, TGGGGGGDWA, and AGGG…GGGF. Residues 134 to 145 show a composition bias toward low complexity; that stretch reads AHHLGPAMSPSP. Over residues 190–199 the composition is skewed to basic and acidic residues; sequence ALHEDGHEAQ. Over residues 220–232 the composition is skewed to low complexity; the sequence is AGGLHAAAAHLHP. The 75-residue stretch at 247–321 folds into the POU-specific domain; that stretch reads EDAPSSDDLE…LLNKWLEETD (75 aa). Residues 339 to 398 constitute a DNA-binding region (homeobox); the sequence is KRKKRTSIEVGVKGALESHFLKCPKPSAHEITGLADSLQLEKEVVRVWFCNRRQKEKRMT. Pro residues predominate over residues 427 to 436; it reads PSAPPPPPPA.

The protein belongs to the POU transcription factor family. Class-3 subfamily. In terms of tissue distribution, neural tissues and testis.

It localises to the nucleus. Its function is as follows. Transcription factor that binds to the octamer motif (5'-ATTTGCAT-3'). Acts as a transcriptional activator when binding cooperatively with SOX4, SOX11, or SOX12 to gene promoters. Acts as a transcriptional repressor of myelin-specific genes. The sequence is that of POU domain, class 3, transcription factor 1 (Pou3f1) from Rattus norvegicus (Rat).